Reading from the N-terminus, the 466-residue chain is MTVASVEQMFSGKIQVGSEVTVRGWVRTRRDSKAGLSFVSVSDGSCFAAIQVVTPAHLPNYETEVRKLTTGCAVIVIGTLAPSLGQGQQFEIQAQSIEVVGWVEDPETYPIQPKQHSLEFLREVAHLRPRTNLFGAVARIRHCLSQAVHRFFHENGYYWITTPIITTSDAEGAGQMFRVSTLDLVNLPRTETGGIDFSHDFFGKETFLTVSGQLNVEAYALALSKVYTFGPTFRAENSHTPRHLAEFWMIEPEIAFADLAEDARVAEQFLKFLFKTVLEERTDDLAFITERVEKTTISKLEGFIKSPFERIEYTDAIKLLERSGKKFDFPVEWGLDLQTEHERWLTEKHIGRPVVVTNYPEHIKAFYMRLNDDGKTVAAMDVLAPGIGEIIGGSQREERLEMLDIRMAQFGLDPTHYQWYRDFRRYGSVPHAGFGLGFERLMVYVCGLSNIRDAIPYPRAPSSAEF.

The protein belongs to the class-II aminoacyl-tRNA synthetase family. In terms of assembly, homodimer.

The protein resides in the cytoplasm. The catalysed reaction is tRNA(Asn) + L-asparagine + ATP = L-asparaginyl-tRNA(Asn) + AMP + diphosphate + H(+). This is Asparagine--tRNA ligase from Xylella fastidiosa (strain 9a5c).